The sequence spans 326 residues: GTP 3',8-cyclase (326 aa).

The Radical SAM core domain maps to 7-232; it reads GFGRSFPYLR…PRAADAGPAR (226 aa). Arg-16 contacts GTP. [4Fe-4S] cluster contacts are provided by Cys-23 and Cys-27. Tyr-29 is a binding site for S-adenosyl-L-methionine. Cys-30 lines the [4Fe-4S] cluster pocket. GTP is bound at residue Arg-65. Position 69 (Gly-69) interacts with S-adenosyl-L-methionine. Thr-96 lines the GTP pocket. Ser-120 contacts S-adenosyl-L-methionine. Position 157 (Lys-157) interacts with GTP. Residue Met-191 coordinates S-adenosyl-L-methionine. [4Fe-4S] cluster is bound by residues Cys-254 and Cys-257. 259 to 261 contributes to the GTP binding site; the sequence is RLR. A [4Fe-4S] cluster-binding site is contributed by Cys-271.

The protein belongs to the radical SAM superfamily. MoaA family. Monomer and homodimer. [4Fe-4S] cluster serves as cofactor.

The catalysed reaction is GTP + AH2 + S-adenosyl-L-methionine = (8S)-3',8-cyclo-7,8-dihydroguanosine 5'-triphosphate + 5'-deoxyadenosine + L-methionine + A + H(+). Its pathway is cofactor biosynthesis; molybdopterin biosynthesis. Catalyzes the cyclization of GTP to (8S)-3',8-cyclo-7,8-dihydroguanosine 5'-triphosphate. This Stenotrophomonas maltophilia (strain R551-3) protein is GTP 3',8-cyclase.